We begin with the raw amino-acid sequence, 429 residues long: MSAIVDIIGREVLDSRGNPTVECDVLLESGVMGRAAVPSGASTGSREAIELRDGDKSRYLGKGVLKAVEHINTEISEAIMGLDASEQAFLDRTLIDLDGTENKSRLGANAMLAVSMAVAKAAAEEAGLPLYRYFGGSGAMQMPVPMMNIVNGGAHANNSLDIQEFMVMPVSATSFREALRCGAEVFHALKKILADKGMSTAVGDEGGFAPNFSSNEECLNTIVQAVEKAGYRMGEDVLLALDCAASEFYHEAEDVYVLEGEGLKLSSTQFADYLANLCDKFPIVSIEDGMAEGDWDGWKTLTDKLGKRVQLVGDDLFVTNTKILKEGIDKGIGNSILIKINQIGTLTETFAAIEMAKRAGYTAVISHRSGETEDSTIADIAVGTNAGQIKTGSLSRSDRISKYNQLLRIEEDLGDIASYPGKSAFYNLR.

Q163 lines the (2R)-2-phosphoglycerate pocket. Residue E205 is the Proton donor of the active site. Mg(2+) contacts are provided by D242, E287, and D314. (2R)-2-phosphoglycerate-binding residues include K339, R368, S369, and K390. The active-site Proton acceptor is K339.

This sequence belongs to the enolase family. Mg(2+) serves as cofactor.

The protein resides in the cytoplasm. The protein localises to the secreted. It is found in the cell surface. The catalysed reaction is (2R)-2-phosphoglycerate = phosphoenolpyruvate + H2O. It participates in carbohydrate degradation; glycolysis; pyruvate from D-glyceraldehyde 3-phosphate: step 4/5. Its function is as follows. Catalyzes the reversible conversion of 2-phosphoglycerate (2-PG) into phosphoenolpyruvate (PEP). It is essential for the degradation of carbohydrates via glycolysis. The polypeptide is Enolase (Cupriavidus pinatubonensis (strain JMP 134 / LMG 1197) (Cupriavidus necator (strain JMP 134))).